Consider the following 440-residue polypeptide: Serine hydroxymethyltransferase (440 aa).

Residues L119 and 123–125 (GHL) each bind (6S)-5,6,7,8-tetrahydrofolate. K228 is modified (N6-(pyridoxal phosphate)lysine). 370–372 (SPF) serves as a coordination point for (6S)-5,6,7,8-tetrahydrofolate.

This sequence belongs to the SHMT family. As to quaternary structure, homodimer. Pyridoxal 5'-phosphate is required as a cofactor.

The protein localises to the cytoplasm. The enzyme catalyses (6R)-5,10-methylene-5,6,7,8-tetrahydrofolate + glycine + H2O = (6S)-5,6,7,8-tetrahydrofolate + L-serine. It participates in one-carbon metabolism; tetrahydrofolate interconversion. Its pathway is amino-acid biosynthesis; glycine biosynthesis; glycine from L-serine: step 1/1. Functionally, catalyzes the reversible interconversion of serine and glycine with tetrahydrofolate (THF) serving as the one-carbon carrier. This reaction serves as the major source of one-carbon groups required for the biosynthesis of purines, thymidylate, methionine, and other important biomolecules. Also exhibits THF-independent aldolase activity toward beta-hydroxyamino acids, producing glycine and aldehydes, via a retro-aldol mechanism. The chain is Serine hydroxymethyltransferase from Chlorobaculum tepidum (strain ATCC 49652 / DSM 12025 / NBRC 103806 / TLS) (Chlorobium tepidum).